The following is a 309-amino-acid chain: Foldase protein PrsA (309 aa).

The N-terminal stretch at 1–20 (MKKKIVAGAVTLLSVAVLAA) is a signal peptide. The N-palmitoyl cysteine moiety is linked to residue C21. C21 carries S-diacylglycerol cysteine lipidation. In terms of domain architecture, PpiC spans 144–241 (TPEVTAQIIK…ASYYIVKLVS (98 aa)).

This sequence belongs to the PrsA family.

It is found in the cell membrane. It catalyses the reaction [protein]-peptidylproline (omega=180) = [protein]-peptidylproline (omega=0). Functionally, plays a major role in protein secretion by helping the post-translocational extracellular folding of several secreted proteins. The chain is Foldase protein PrsA from Streptococcus gordonii (strain Challis / ATCC 35105 / BCRC 15272 / CH1 / DL1 / V288).